Here is a 924-residue protein sequence, read N- to C-terminus: Inositol polyphosphate 4-phosphatase type II (924 aa).

The segment covering 1–13 (MEIKEEGASEEGQ) has biased composition (basic and acidic residues). 3 disordered regions span residues 1–24 (MEIK…ANDP), 481–516 (ILKK…HSDY), and 546–570 (DGGS…AIPS). The C2 domain maps to 23 to 165 (DPGDCQFTSI…LKSKEQLLVL (143 aa)).

This sequence belongs to the inositol 3,4-bisphosphate 4-phosphatase family. In terms of tissue distribution, widely expressed with highest levels occurring in the skeletal muscle and heart.

It carries out the reaction a 1,2-diacyl-sn-glycero-3-phospho-(1D-myo-inositol-3,4-bisphosphate) + H2O = a 1,2-diacyl-sn-glycero-3-phospho-(1D-myo-inositol-3-phosphate) + phosphate. It catalyses the reaction 1D-myo-inositol 1,3,4-trisphosphate + H2O = 1D-myo-inositol 1,3-bisphosphate + phosphate. The catalysed reaction is 1D-myo-inositol 3,4-bisphosphate + H2O = 1D-myo-inositol 3-phosphate + phosphate. It functions in the pathway signal transduction; phosphatidylinositol signaling pathway. With respect to regulation, strongly inhibited by inositol hexakisphosphate. Catalyzes the hydrolysis of the 4-position phosphate of phosphatidylinositol 3,4-bisphosphate, inositol 1,3,4-trisphosphate and inositol 3,4-trisphosphate. Plays a role in the late stages of macropinocytosis by dephosphorylating phosphatidylinositol 3,4-bisphosphate in membrane ruffles. The lipid phosphatase activity is critical for tumor suppressor function. Antagonizes the PI3K-AKT/PKB signaling pathway by dephosphorylating phosphoinositides and thereby modulating cell cycle progression and cell survival. The chain is Inositol polyphosphate 4-phosphatase type II (INPP4B) from Homo sapiens (Human).